The primary structure comprises 120 residues: Spermidine export protein MdtJ (120 aa).

4 consecutive transmembrane segments (helical) span residues 1-21 (MFYWILLALAIVAEITGTLSM), 31-51 (TGFILMLVMISLSYIFLSFAV), 54-74 (IALGVAYALWEGIGILLITLF), and 81-101 (EALSTMKIAGLATLVVGIVLI).

This sequence belongs to the drug/metabolite transporter (DMT) superfamily. Small multidrug resistance (SMR) (TC 2.A.7.1) family. MdtJ subfamily. In terms of assembly, forms a complex with MdtI.

It localises to the cell inner membrane. Catalyzes the excretion of spermidine. This Enterobacter sp. (strain 638) protein is Spermidine export protein MdtJ.